The following is a 619-amino-acid chain: MPKLRSATSTEGRNMAGARALWRATGVKDNDFGKPIIAIANSFTQFVPGHVHLKDMGSLVASAIEEAGGIAKEFNTIAVDDGIAMGHGGMLYSLPSRELIADSVEYMVNAHCADALVCISNCDKITPGMLMAALRLNIPVVFVSGGPMEAGKTKLSDKLIKLDLVDAMVAGADSNVSDEDSAKIERSACPTCGSCSGMFTANSMNCLTEALGLSLPGNGSMLATHADRRELFLEAGRRVMVLAKRYYHQDDESALPRNIANFKAFENAMTLDIAMGGSSNTVLHLLAAAQEADVDFTMADIDRMSRLVPHLCKVAPSTPKYHMEDVHRAGGVMGILGELDRAGLLHTDVFHVAADEGGNLKSVLAKYDVMQTQDEKVKHFFMAGPAGIPTTKAFSQDCRWPSLDNDRQEGCIRSREFAFSQEGGLAVLSGNVAENGCIVKTAGVDESNLTFVGSARVYESQDDAVAGILGGEVVAGDVVVIRYEGPKGGPGMQEMLYPTSYLKSRGLGKACALITDGRFSGGTSGLSIGHVSPEAAAGGTIALIENGDRIEIDIPKRSIKLAISDAELNARREAMLARGPMAWKPIGRERYVSLALKAYAMLATSADKGAVRDRSKLED.

Aspartate 81 is a binding site for Mg(2+). A [2Fe-2S] cluster-binding site is contributed by cysteine 122. Aspartate 123 and lysine 124 together coordinate Mg(2+). Lysine 124 is modified (N6-carboxylysine). Cysteine 195 lines the [2Fe-2S] cluster pocket. Mg(2+) is bound at residue glutamate 494. The active-site Proton acceptor is serine 520.

The protein belongs to the IlvD/Edd family. Homodimer. [2Fe-2S] cluster is required as a cofactor. Requires Mg(2+) as cofactor.

The catalysed reaction is (2R)-2,3-dihydroxy-3-methylbutanoate = 3-methyl-2-oxobutanoate + H2O. It catalyses the reaction (2R,3R)-2,3-dihydroxy-3-methylpentanoate = (S)-3-methyl-2-oxopentanoate + H2O. Its pathway is amino-acid biosynthesis; L-isoleucine biosynthesis; L-isoleucine from 2-oxobutanoate: step 3/4. It participates in amino-acid biosynthesis; L-valine biosynthesis; L-valine from pyruvate: step 3/4. Functionally, functions in the biosynthesis of branched-chain amino acids. Catalyzes the dehydration of (2R,3R)-2,3-dihydroxy-3-methylpentanoate (2,3-dihydroxy-3-methylvalerate) into 2-oxo-3-methylpentanoate (2-oxo-3-methylvalerate) and of (2R)-2,3-dihydroxy-3-methylbutanoate (2,3-dihydroxyisovalerate) into 2-oxo-3-methylbutanoate (2-oxoisovalerate), the penultimate precursor to L-isoleucine and L-valine, respectively. This Shewanella putrefaciens (strain CN-32 / ATCC BAA-453) protein is Dihydroxy-acid dehydratase.